Consider the following 456-residue polypeptide: Bifunctional protein GlmU (456 aa).

Positions 1–229 are pyrophosphorylase; that stretch reads MLNNAMSVVI…LSEVEGVNNR (229 aa). UDP-N-acetyl-alpha-D-glucosamine is bound by residues 11 to 14, K25, Q76, 81 to 82, 103 to 105, G140, E154, N169, and N227; these read LAAG, GT, and YGD. D105 provides a ligand contact to Mg(2+). A Mg(2+)-binding site is contributed by N227. Residues 230-250 form a linker region; the sequence is LQLSRLERVYQSEQAEKLLLA. The tract at residues 251-456 is N-acetyltransferase; sequence GVMLRDPARF…EGWRRPVKKK (206 aa). Residues R333 and K351 each coordinate UDP-N-acetyl-alpha-D-glucosamine. The Proton acceptor role is filled by H363. The UDP-N-acetyl-alpha-D-glucosamine site is built by Y366 and N377. Acetyl-CoA-binding positions include A380, 386 to 387, S405, A423, and R440; that span reads NY.

In the N-terminal section; belongs to the N-acetylglucosamine-1-phosphate uridyltransferase family. It in the C-terminal section; belongs to the transferase hexapeptide repeat family. As to quaternary structure, homotrimer. Mg(2+) is required as a cofactor.

It is found in the cytoplasm. It catalyses the reaction alpha-D-glucosamine 1-phosphate + acetyl-CoA = N-acetyl-alpha-D-glucosamine 1-phosphate + CoA + H(+). The enzyme catalyses N-acetyl-alpha-D-glucosamine 1-phosphate + UTP + H(+) = UDP-N-acetyl-alpha-D-glucosamine + diphosphate. The protein operates within nucleotide-sugar biosynthesis; UDP-N-acetyl-alpha-D-glucosamine biosynthesis; N-acetyl-alpha-D-glucosamine 1-phosphate from alpha-D-glucosamine 6-phosphate (route II): step 2/2. It participates in nucleotide-sugar biosynthesis; UDP-N-acetyl-alpha-D-glucosamine biosynthesis; UDP-N-acetyl-alpha-D-glucosamine from N-acetyl-alpha-D-glucosamine 1-phosphate: step 1/1. It functions in the pathway bacterial outer membrane biogenesis; LPS lipid A biosynthesis. Catalyzes the last two sequential reactions in the de novo biosynthetic pathway for UDP-N-acetylglucosamine (UDP-GlcNAc). The C-terminal domain catalyzes the transfer of acetyl group from acetyl coenzyme A to glucosamine-1-phosphate (GlcN-1-P) to produce N-acetylglucosamine-1-phosphate (GlcNAc-1-P), which is converted into UDP-GlcNAc by the transfer of uridine 5-monophosphate (from uridine 5-triphosphate), a reaction catalyzed by the N-terminal domain. In Escherichia coli O8 (strain IAI1), this protein is Bifunctional protein GlmU.